Reading from the N-terminus, the 158-residue chain is Small ribosomal subunit protein uS17 (158 aa).

An N-acetylalanine modification is found at A2. A Citrulline modification is found at R22. 3 positions are modified to N6-acetyllysine: K38, K45, and K58. Residue C60 is the site of S-palmitoyl cysteine attachment. A Phosphoserine modification is found at S67. Omega-N-methylarginine is present on R69. S110 is subject to Phosphoserine.

The protein belongs to the universal ribosomal protein uS17 family. In terms of assembly, component of the small ribosomal subunit. Part of the small subunit (SSU) processome, composed of more than 70 proteins and the RNA chaperone small nucleolar RNA (snoRNA) U3. Citrullinated by PADI4.

It localises to the cytoplasm. The protein localises to the nucleus. Its subcellular location is the nucleolus. In terms of biological role, component of the small ribosomal subunit. The ribosome is a large ribonucleoprotein complex responsible for the synthesis of proteins in the cell. Part of the small subunit (SSU) processome, first precursor of the small eukaryotic ribosomal subunit. During the assembly of the SSU processome in the nucleolus, many ribosome biogenesis factors, an RNA chaperone and ribosomal proteins associate with the nascent pre-rRNA and work in concert to generate RNA folding, modifications, rearrangements and cleavage as well as targeted degradation of pre-ribosomal RNA by the RNA exosome. This is Small ribosomal subunit protein uS17 (Rps11) from Mus musculus (Mouse).